Reading from the N-terminus, the 199-residue chain is Dephospho-CoA kinase (199 aa).

The DPCK domain occupies 3–199 (VIGLTGSIGM…AAAKMPRRRS (197 aa)). Residue 11–16 (GMGKST) participates in ATP binding.

It belongs to the CoaE family.

Its subcellular location is the cytoplasm. It carries out the reaction 3'-dephospho-CoA + ATP = ADP + CoA + H(+). It participates in cofactor biosynthesis; coenzyme A biosynthesis; CoA from (R)-pantothenate: step 5/5. In terms of biological role, catalyzes the phosphorylation of the 3'-hydroxyl group of dephosphocoenzyme A to form coenzyme A. The sequence is that of Dephospho-CoA kinase from Nitrobacter winogradskyi (strain ATCC 25391 / DSM 10237 / CIP 104748 / NCIMB 11846 / Nb-255).